The following is a 758-amino-acid chain: Vitamin K-dependent gamma-carboxylase (758 aa).

Residues 1-29 form a disordered region; the sequence is MAVHRGSARAAPASDKVQKNKPAQTSGLE. A2 is modified (N-acetylalanine). The Cytoplasmic portion of the chain corresponds to 2-60; sequence AVHRGSARAAPASDKVQKNKPAQTSGLEQGSRMARIFGFEWADLSSWQSVVTLLNRPTD. A helical transmembrane segment spans residues 61–81; that stretch reads PANLAVFRFLFAFLMLLDIPQ. The Lumenal portion of the chain corresponds to 82–113; the sequence is ERGLSSLDRKYLDGLDVCRFPLLDALRPLPLD. An intrachain disulfide couples C99 to C450. A helical transmembrane segment spans residues 114–134; that stretch reads WMYLVYTIMFLGALGMMLGLW. Residues 135-136 are Cytoplasmic-facing; it reads YR. The chain crosses the membrane as a helical span at residues 137–157; the sequence is LSCMLFLLPYWYVFLLDKTSW. Residues 158-292 lie on the Lumenal side of the membrane; the sequence is NNHSYLYGLL…VSYFHCMNSQ (135 aa). Residues 293–313 traverse the membrane as a helical segment; sequence LFSIGMFPYVMLASSPLFCSA. The Cytoplasmic portion of the chain corresponds to 314–361; that stretch reads EWPRKLVARCPKRLQELLPAKAAPRPSASCVYKRARAKAGQKPGLRHH. Residues 362 to 382 traverse the membrane as a helical segment; the sequence is LGTVFTLLYLLEQLFLPYSHF. At 383–758 the chain is on the lumenal side; the sequence is LTQGYNNWTN…PDSEHVHSEL (376 aa). Positions 727 to 758 are disordered; that stretch reads PFEPVDESSASNTDSSDPHPSEPDSEHVHSEL. Residues 742 to 758 show a composition bias toward basic and acidic residues; the sequence is SDPHPSEPDSEHVHSEL.

It belongs to the vitamin K-dependent gamma-carboxylase family. Monomer. Interacts with CALU.

The protein resides in the endoplasmic reticulum membrane. It catalyses the reaction 4-carboxy-L-glutamyl-[protein] + 2,3-epoxyphylloquinone + H2O + H(+) = phylloquinol + L-glutamyl-[protein] + CO2 + O2. Mediates the vitamin K-dependent carboxylation of glutamate residues to calcium-binding gamma-carboxyglutamate (Gla) residues with the concomitant conversion of the reduced hydroquinone form of vitamin K to vitamin K epoxide. Catalyzes gamma-carboxylation of various proteins, such as blood coagulation factors (F2, F7, F9 and F10), osteocalcin (BGLAP) or matrix Gla protein (MGP). The sequence is that of Vitamin K-dependent gamma-carboxylase (Ggcx) from Rattus norvegicus (Rat).